We begin with the raw amino-acid sequence, 545 residues long: Glucose-6-phosphate isomerase (545 aa).

Glu351 serves as the catalytic Proton donor. Catalysis depends on residues His382 and Lys510.

The protein belongs to the GPI family.

Its subcellular location is the cytoplasm. The catalysed reaction is alpha-D-glucose 6-phosphate = beta-D-fructose 6-phosphate. It functions in the pathway carbohydrate biosynthesis; gluconeogenesis. It participates in carbohydrate degradation; glycolysis; D-glyceraldehyde 3-phosphate and glycerone phosphate from D-glucose: step 2/4. Its function is as follows. Catalyzes the reversible isomerization of glucose-6-phosphate to fructose-6-phosphate. The polypeptide is Glucose-6-phosphate isomerase (Shewanella putrefaciens (strain CN-32 / ATCC BAA-453)).